Reading from the N-terminus, the 505-residue chain is Glycerol kinase (505 aa).

T12 contacts ADP. ATP contacts are provided by T12, T13, and S14. T12 is a binding site for sn-glycerol 3-phosphate. R16 is a binding site for ADP. Sn-glycerol 3-phosphate is bound by residues R82, E83, Y134, and D246. R82, E83, Y134, D246, and Q247 together coordinate glycerol. Positions 268 and 312 each coordinate ADP. Residues T268, G312, Q316, and G413 each coordinate ATP. ADP is bound by residues G413 and N417.

It belongs to the FGGY kinase family.

It catalyses the reaction glycerol + ATP = sn-glycerol 3-phosphate + ADP + H(+). It participates in polyol metabolism; glycerol degradation via glycerol kinase pathway; sn-glycerol 3-phosphate from glycerol: step 1/1. Its activity is regulated as follows. Inhibited by fructose 1,6-bisphosphate (FBP). In terms of biological role, key enzyme in the regulation of glycerol uptake and metabolism. Catalyzes the phosphorylation of glycerol to yield sn-glycerol 3-phosphate. The chain is Glycerol kinase from Beutenbergia cavernae (strain ATCC BAA-8 / DSM 12333 / CCUG 43141 / JCM 11478 / NBRC 16432 / NCIMB 13614 / HKI 0122).